The sequence spans 464 residues: Dihydrolipoyl dehydrogenase (464 aa).

Residues E33–C41, K50, and G113 contribute to the FAD site. A disulfide bond links C41 and C46. NAD(+) contacts are provided by residues G178–I182, E201, and A266–F269. FAD-binding residues include D309 and A317. The active-site Proton acceptor is the H443.

The protein belongs to the class-I pyridine nucleotide-disulfide oxidoreductase family. In terms of assembly, homodimer. Part of the PDH complex, consisting of multiple copies of AceE (E1), DlaT (E2) and Lpd (E3), and of the BCKADH complex, consisting of multiple copies of BkdA/BkdB (E1), BkdC (E2) and Lpd (E3). Requires FAD as cofactor.

Its subcellular location is the cytoplasm. The catalysed reaction is N(6)-[(R)-dihydrolipoyl]-L-lysyl-[protein] + NAD(+) = N(6)-[(R)-lipoyl]-L-lysyl-[protein] + NADH + H(+). In terms of biological role, lipoamide dehydrogenase is a component of the alpha-ketoacid dehydrogenase complexes. Catalyzes the reoxidation of dihydrolipoyl groups which are covalently attached to the lipoate acyltransferase components (E2) of the complexes. The chain is Dihydrolipoyl dehydrogenase (lpd) from Mycobacterium bovis (strain ATCC BAA-935 / AF2122/97).